The sequence spans 193 residues: MEVNLLQYEQKYHNYIVAGVDEAGRGSLVGPVVASAVIIDKVDIISGIKDSKKLSKNKRDILYEQITSNYVWSTAIIEHTEIDDINILEATKKACTIAVANLSLKPEKILVDGNMKFSDVRFISIINGDNLSLSIAAASIIAKVTRDRLMLELSAEYPQYLWHKNYGYGTREHIEAINTHGLSSYHRKSFKFC.

The region spanning Y15–C193 is the RNase H type-2 domain. Positions 21, 22, and 112 each coordinate a divalent metal cation.

This sequence belongs to the RNase HII family. Mn(2+) serves as cofactor. The cofactor is Mg(2+).

Its subcellular location is the cytoplasm. It catalyses the reaction Endonucleolytic cleavage to 5'-phosphomonoester.. Its function is as follows. Endonuclease that specifically degrades the RNA of RNA-DNA hybrids. The chain is Ribonuclease HII from Rickettsia typhi (strain ATCC VR-144 / Wilmington).